Consider the following 350-residue polypeptide: Ceramide synthase 1 (350 aa).

The residue at position 2 (Ala-2) is an N-acetylalanine. 6 helical membrane passes run 53 to 73, 103 to 123, 148 to 168, 176 to 196, 239 to 259, and 287 to 307; these read AHLA…WTAL, AWKL…LLGT, IAVA…ATVY, SVVM…SYAF, VANL…LYWF, and LLLL…AFAA. Residues 97–311 form the TLC domain; the sequence is ARLPESAWKL…IVAFAAKVLT (215 aa).

Acetylated. Deacetylation by SIRT3 increases enzyme activity and promotes mitochondrial ceramide accumulation. In terms of tissue distribution, expressed in brain, skeletal muscle, heart and perigonadal white adipose tissue.

Its subcellular location is the endoplasmic reticulum membrane. The enzyme catalyses a sphingoid base + octadecanoyl-CoA = an N-octadecanoyl-sphingoid base + CoA + H(+). It catalyses the reaction sphinganine + octadecanoyl-CoA = N-(octadecanoyl)-sphinganine + CoA + H(+). The catalysed reaction is hexadecasphinganine + octadecanoyl-CoA = N-octadecanoylhexadecasphinganine + CoA + H(+). It carries out the reaction sphing-4-enine + octadecanoyl-CoA = N-octadecanoylsphing-4-enine + CoA + H(+). The enzyme catalyses heptadecasphing-4-enine + octadecanoyl-CoA = N-octadecanoyl-heptadecasphing-4-enine + CoA + H(+). It catalyses the reaction 2-hydroxyoctadecanoyl-CoA + sphinganine = N-(2-hydroxyoctadecanoyl)-sphinganine + CoA + H(+). The catalysed reaction is eicosanoyl-CoA + sphinganine = N-eicosanoylsphinganine + CoA + H(+). The protein operates within lipid metabolism; sphingolipid metabolism. Inhibited by fumonisin B1. In terms of biological role, ceramide synthase that catalyzes the transfer of the acyl chain from acyl-CoA to a sphingoid base, with high selectivity toward stearoyl-CoA (octadecanoyl-CoA; C18:0-CoA). N-acylates sphinganine and sphingosine bases to form dihydroceramides and ceramides in de novo synthesis and salvage pathways, respectively. Plays a predominant role in skeletal muscle in regulating C18 ceramide and dihydroceramide levels with an impact on whole-body glucose metabolism and insulin sensitivity. Protects from diet-induced obesity by suppressing the uptake of glucose in multiple organs in a FGF21-dependent way. Generates C18 ceramides in the brain, playing a critical role in cerebellar development and Purkinje cell function. In response to cellular stress mediates mitophagy, a known defense mechanism against cell transformation and aging. Upon mitochondria fission, generates C18 ceramides that anchor lipidated MAP1LC3B/LC3B-II autophagolysosomes to outer mitochondrial membranes to eliminate damaged mitochondria. This is Ceramide synthase 1 from Mus musculus (Mouse).